Reading from the N-terminus, the 107-residue chain is Subtilisin inhibitor-like protein 3 (107 aa).

Intrachain disulfides connect Cys29–Cys44 and Cys65–Cys95.

It belongs to the protease inhibitor I16 (SSI) family. As to quaternary structure, homodimer.

It localises to the secreted. Functionally, inhibitor of subtilisin BPN' and trypsin. The polypeptide is Subtilisin inhibitor-like protein 3 (Streptomyces coelicolor).